The following is a 466-amino-acid chain: Asparagine--tRNA ligase (466 aa).

This sequence belongs to the class-II aminoacyl-tRNA synthetase family. Homodimer.

It is found in the cytoplasm. It catalyses the reaction tRNA(Asn) + L-asparagine + ATP = L-asparaginyl-tRNA(Asn) + AMP + diphosphate + H(+). This Myxococcus xanthus (strain DK1622) protein is Asparagine--tRNA ligase.